A 319-amino-acid chain; its full sequence is Cytochrome f (319 aa).

Residues 1 to 34 (MQNRNTYEWTKKMTRLISVLVMIHIITRTSISNA) form the signal peptide. Positions 35, 55, 58, and 59 each coordinate heme. The chain crosses the membrane as a helical span at residues 285–305 (VKGLLLFLASVILAQIFLVLK).

The protein belongs to the cytochrome f family. The 4 large subunits of the cytochrome b6-f complex are cytochrome b6, subunit IV (17 kDa polypeptide, petD), cytochrome f and the Rieske protein, while the 4 small subunits are PetG, PetL, PetM and PetN. The complex functions as a dimer. Heme is required as a cofactor.

Its subcellular location is the plastid. The protein resides in the chloroplast thylakoid membrane. Functionally, component of the cytochrome b6-f complex, which mediates electron transfer between photosystem II (PSII) and photosystem I (PSI), cyclic electron flow around PSI, and state transitions. The sequence is that of Cytochrome f from Pinus koraiensis (Korean pine).